Consider the following 361-residue polypeptide: tRNA pseudouridine synthase D (361 aa).

Asp76 acts as the Nucleophile in catalysis. In terms of domain architecture, TRUD spans 151 to 318 (GIPNYFGYQR…EQGSRRLAWI (168 aa)).

It belongs to the pseudouridine synthase TruD family.

It carries out the reaction uridine(13) in tRNA = pseudouridine(13) in tRNA. In terms of biological role, responsible for synthesis of pseudouridine from uracil-13 in transfer RNAs. The polypeptide is tRNA pseudouridine synthase D (Wolinella succinogenes (strain ATCC 29543 / DSM 1740 / CCUG 13145 / JCM 31913 / LMG 7466 / NCTC 11488 / FDC 602W) (Vibrio succinogenes)).